Consider the following 272-residue polypeptide: MQNIINSWFVQGMIKATYDMWLKGWDERNGGNVSLRLLDDDVVSYKDEFYQNPRHVEITQNITALANQYFIVTGSGKFFRNVIIDPADTLAVIKVDEQGKGYYIMWGLVNGGVPTSELPAHLQSHIVRMKVSGGKDRVIMHCHATNLIALTYVLELDPKVITRELWEMSTECLVVFPDGVGVLPWMTPGKDEIGYATAQEMAQHPLVLWAFHGVFGTGPTLDDAFGLIDTAEKSAEILVKVLSMGGKRQTIQTDEFKLLAERFGVTPMDGVL.

Glu117 is a catalytic residue. Zn(2+)-binding residues include His141, His143, and His212.

The protein belongs to the aldolase class II family. RhaD subfamily. The cofactor is Zn(2+).

It localises to the cytoplasm. It catalyses the reaction L-rhamnulose 1-phosphate = (S)-lactaldehyde + dihydroxyacetone phosphate. The protein operates within carbohydrate degradation; L-rhamnose degradation; glycerone phosphate from L-rhamnose: step 3/3. Functionally, catalyzes the reversible cleavage of L-rhamnulose-1-phosphate to dihydroxyacetone phosphate (DHAP) and L-lactaldehyde. The protein is Rhamnulose-1-phosphate aldolase of Mannheimia succiniciproducens (strain KCTC 0769BP / MBEL55E).